A 511-amino-acid chain; its full sequence is 2,3-bisphosphoglycerate-independent phosphoglycerate mutase (511 aa).

Residue D12 participates in Mn(2+) binding. Y36 carries the phosphotyrosine modification. Residue S62 coordinates Mn(2+). The active-site Phosphoserine intermediate is S62. Substrate-binding positions include H123, R153–D154, R185, R191, R261–R264, and K336. D403, H407, D444, H445, and H462 together coordinate Mn(2+).

The protein belongs to the BPG-independent phosphoglycerate mutase family. In terms of assembly, monomer. The cofactor is Mn(2+).

The catalysed reaction is (2R)-2-phosphoglycerate = (2R)-3-phosphoglycerate. It functions in the pathway carbohydrate degradation; glycolysis; pyruvate from D-glyceraldehyde 3-phosphate: step 3/5. Catalyzes the interconversion of 2-phosphoglycerate and 3-phosphoglycerate. The polypeptide is 2,3-bisphosphoglycerate-independent phosphoglycerate mutase (Geobacillus thermodenitrificans (strain NG80-2)).